We begin with the raw amino-acid sequence, 433 residues long: Probable phosphoglucosamine mutase (433 aa).

Residue serine 91 is the Phosphoserine intermediate of the active site. Serine 91, aspartate 229, aspartate 231, and aspartate 233 together coordinate Mg(2+). Residue serine 91 is modified to Phosphoserine.

This sequence belongs to the phosphohexose mutase family. Mg(2+) is required as a cofactor. Activated by phosphorylation.

The enzyme catalyses alpha-D-glucosamine 1-phosphate = D-glucosamine 6-phosphate. Functionally, catalyzes the conversion of glucosamine-6-phosphate to glucosamine-1-phosphate. The protein is Probable phosphoglucosamine mutase of Methanococcoides burtonii (strain DSM 6242 / NBRC 107633 / OCM 468 / ACE-M).